Reading from the N-terminus, the 113-residue chain is U11-theraphotoxin-Hhn1a (113 aa).

An N-terminal signal peptide occupies residues 1 to 21 (MNTVRVTFLLVFVLAVSLGQA). A propeptide spanning residues 22-74 (DKDENRMEMQEKAEQGKSYLDFAENLLLQKLEELEAKLLEEDSEESRNSRQKR) is cleaved from the precursor. 3 cysteine pairs are disulfide-bonded: Cys-75/Cys-90, Cys-82/Cys-95, and Cys-89/Cys-110.

Belongs to the neurotoxin 14 (magi-1) family. 01 (HNTX-16) subfamily. As to expression, expressed by the venom gland.

The protein localises to the secreted. Its function is as follows. Probable ion channel inhibitor. This is U11-theraphotoxin-Hhn1a from Cyriopagopus hainanus (Chinese bird spider).